We begin with the raw amino-acid sequence, 360 residues long: Phospho-N-acetylmuramoyl-pentapeptide-transferase (360 aa).

10 helical membrane passes run Gly-27 to Leu-47, Thr-71 to Ala-91, Leu-93 to Phe-113, Phe-128 to Ile-148, Phe-168 to Gly-188, Gly-199 to Ser-219, Leu-239 to Pro-259, Ala-262 to Val-282, Ile-288 to Val-308, and Gln-337 to Leu-357.

Belongs to the glycosyltransferase 4 family. MraY subfamily. The cofactor is Mg(2+).

It is found in the cell inner membrane. The enzyme catalyses UDP-N-acetyl-alpha-D-muramoyl-L-alanyl-gamma-D-glutamyl-meso-2,6-diaminopimeloyl-D-alanyl-D-alanine + di-trans,octa-cis-undecaprenyl phosphate = di-trans,octa-cis-undecaprenyl diphospho-N-acetyl-alpha-D-muramoyl-L-alanyl-D-glutamyl-meso-2,6-diaminopimeloyl-D-alanyl-D-alanine + UMP. It participates in cell wall biogenesis; peptidoglycan biosynthesis. Catalyzes the initial step of the lipid cycle reactions in the biosynthesis of the cell wall peptidoglycan: transfers peptidoglycan precursor phospho-MurNAc-pentapeptide from UDP-MurNAc-pentapeptide onto the lipid carrier undecaprenyl phosphate, yielding undecaprenyl-pyrophosphoryl-MurNAc-pentapeptide, known as lipid I. This is Phospho-N-acetylmuramoyl-pentapeptide-transferase from Brucella anthropi (strain ATCC 49188 / DSM 6882 / CCUG 24695 / JCM 21032 / LMG 3331 / NBRC 15819 / NCTC 12168 / Alc 37) (Ochrobactrum anthropi).